The following is a 234-amino-acid chain: Demethylmenaquinone methyltransferase (234 aa).

Residues T58, D79, and N106–A107 each bind S-adenosyl-L-methionine.

The protein belongs to the class I-like SAM-binding methyltransferase superfamily. MenG/UbiE family.

It catalyses the reaction a 2-demethylmenaquinol + S-adenosyl-L-methionine = a menaquinol + S-adenosyl-L-homocysteine + H(+). The protein operates within quinol/quinone metabolism; menaquinone biosynthesis; menaquinol from 1,4-dihydroxy-2-naphthoate: step 2/2. Its function is as follows. Methyltransferase required for the conversion of demethylmenaquinol (DMKH2) to menaquinol (MKH2). This chain is Demethylmenaquinone methyltransferase, found in Bacillus pumilus (strain SAFR-032).